The following is a 294-amino-acid chain: Probable 2-(5''-triphosphoribosyl)-3'-dephosphocoenzyme-A synthase (294 aa).

The protein belongs to the CitG/MdcB family.

It catalyses the reaction 3'-dephospho-CoA + ATP = 2'-(5''-triphospho-alpha-D-ribosyl)-3'-dephospho-CoA + adenine. This chain is Probable 2-(5''-triphosphoribosyl)-3'-dephosphocoenzyme-A synthase, found in Streptococcus equi subsp. equi (strain 4047).